A 339-amino-acid chain; its full sequence is DNA-directed RNA polymerase subunit alpha (339 aa).

The segment at 1–233 (MVREEVAGST…DLFLPFLHAE (233 aa)) is alpha N-terminal domain (alpha-NTD). The segment at 264 to 339 (KKGIPLNCIF…IDLLKNKLSF (76 aa)) is alpha C-terminal domain (alpha-CTD).

The protein belongs to the RNA polymerase alpha chain family. In terms of assembly, in plastids the minimal PEP RNA polymerase catalytic core is composed of four subunits: alpha, beta, beta', and beta''. When a (nuclear-encoded) sigma factor is associated with the core the holoenzyme is formed, which can initiate transcription.

The protein localises to the plastid. The protein resides in the chloroplast. It carries out the reaction RNA(n) + a ribonucleoside 5'-triphosphate = RNA(n+1) + diphosphate. Its function is as follows. DNA-dependent RNA polymerase catalyzes the transcription of DNA into RNA using the four ribonucleoside triphosphates as substrates. The polypeptide is DNA-directed RNA polymerase subunit alpha (Australopyrum velutinum (Mountain wheat-grass)).